Consider the following 556-residue polypeptide: Oxygen-dependent choline dehydrogenase (556 aa).

4–33 (DYIIIGAGSAGNVLATRLTEDPNTTVLLLE) is a binding site for FAD. The Proton acceptor role is filled by His473.

Belongs to the GMC oxidoreductase family. The cofactor is FAD.

It carries out the reaction choline + A = betaine aldehyde + AH2. It catalyses the reaction betaine aldehyde + NAD(+) + H2O = glycine betaine + NADH + 2 H(+). The protein operates within amine and polyamine biosynthesis; betaine biosynthesis via choline pathway; betaine aldehyde from choline (cytochrome c reductase route): step 1/1. Functionally, involved in the biosynthesis of the osmoprotectant glycine betaine. Catalyzes the oxidation of choline to betaine aldehyde and betaine aldehyde to glycine betaine at the same rate. The sequence is that of Oxygen-dependent choline dehydrogenase from Escherichia coli O127:H6 (strain E2348/69 / EPEC).